Consider the following 375-residue polypeptide: Dual specificity protein phosphatase 4 (375 aa).

Residues 25–143 enclose the Rhodanese domain; that stretch reads SGGRCLLLDC…FASEYPEFCA (119 aa). The region spanning 176–317 is the Tyrosine-protein phosphatase domain; it reads GPVEILPFLY…LLQFESQVLA (142 aa). Residue C261 is the Phosphocysteine intermediate of the active site.

This sequence belongs to the protein-tyrosine phosphatase family. Non-receptor class dual specificity subfamily.

Its subcellular location is the nucleus. The enzyme catalyses O-phospho-L-tyrosyl-[protein] + H2O = L-tyrosyl-[protein] + phosphate. It catalyses the reaction O-phospho-L-seryl-[protein] + H2O = L-seryl-[protein] + phosphate. It carries out the reaction O-phospho-L-threonyl-[protein] + H2O = L-threonyl-[protein] + phosphate. Functionally, regulates mitogenic signal transduction by dephosphorylating both Thr and Tyr residues on MAP kinases ERK1 and ERK2. The protein is Dual specificity protein phosphatase 4 (DUSP4) of Gallus gallus (Chicken).